A 225-amino-acid polypeptide reads, in one-letter code: Enolase-phosphatase E1 (225 aa).

This sequence belongs to the HAD-like hydrolase superfamily. MasA/MtnC family. As to quaternary structure, monomer. Mg(2+) is required as a cofactor.

The enzyme catalyses 5-methylsulfanyl-2,3-dioxopentyl phosphate + H2O = 1,2-dihydroxy-5-(methylsulfanyl)pent-1-en-3-one + phosphate. It participates in amino-acid biosynthesis; L-methionine biosynthesis via salvage pathway; L-methionine from S-methyl-5-thio-alpha-D-ribose 1-phosphate: step 3/6. Its pathway is amino-acid biosynthesis; L-methionine biosynthesis via salvage pathway; L-methionine from S-methyl-5-thio-alpha-D-ribose 1-phosphate: step 4/6. Its function is as follows. Bifunctional enzyme that catalyzes the enolization of 2,3-diketo-5-methylthiopentyl-1-phosphate (DK-MTP-1-P) into the intermediate 2-hydroxy-3-keto-5-methylthiopentenyl-1-phosphate (HK-MTPenyl-1-P), which is then dephosphorylated to form the acireductone 1,2-dihydroxy-3-keto-5-methylthiopentene (DHK-MTPene). The chain is Enolase-phosphatase E1 from Pseudomonas aeruginosa (strain LESB58).